The primary structure comprises 277 residues: Shikimate dehydrogenase (NADP(+)) (277 aa).

Residues 15–17 and Thr-62 contribute to the shikimate site; that span reads SLS. Catalysis depends on Lys-66, which acts as the Proton acceptor. Shikimate-binding residues include Asn-87 and Asp-102. NADP(+) is bound by residues 127–131, 151–156, and Ile-219; these read GAGGA and NRTVDK. Tyr-221 is a binding site for shikimate. Gly-242 serves as a coordination point for NADP(+).

Belongs to the shikimate dehydrogenase family. As to quaternary structure, homodimer.

The catalysed reaction is shikimate + NADP(+) = 3-dehydroshikimate + NADPH + H(+). Its pathway is metabolic intermediate biosynthesis; chorismate biosynthesis; chorismate from D-erythrose 4-phosphate and phosphoenolpyruvate: step 4/7. Functionally, involved in the biosynthesis of the chorismate, which leads to the biosynthesis of aromatic amino acids. Catalyzes the reversible NADPH linked reduction of 3-dehydroshikimate (DHSA) to yield shikimate (SA). The protein is Shikimate dehydrogenase (NADP(+)) of Bacillus thuringiensis subsp. konkukian (strain 97-27).